The following is a 169-amino-acid chain: uncharacterized protein (169 aa).

Residues 18-130 (VVEHCLAVSE…VAHADNLIFG (113 aa)) form the HD domain.

This is an uncharacterized protein from Methanocaldococcus jannaschii (strain ATCC 43067 / DSM 2661 / JAL-1 / JCM 10045 / NBRC 100440) (Methanococcus jannaschii).